Reading from the N-terminus, the 153-residue chain is 6,7-dimethyl-8-ribityllumazine synthase (153 aa).

5-amino-6-(D-ribitylamino)uracil-binding positions include phenylalanine 21, 55-57, and 79-81; these read AFE and CVI. 84–85 is a binding site for (2S)-2-hydroxy-3-oxobutyl phosphate; sequence AT. Histidine 87 functions as the Proton donor in the catalytic mechanism. Phenylalanine 112 is a binding site for 5-amino-6-(D-ribitylamino)uracil. Arginine 126 lines the (2S)-2-hydroxy-3-oxobutyl phosphate pocket.

This sequence belongs to the DMRL synthase family. Forms an icosahedral capsid composed of 60 subunits, arranged as a dodecamer of pentamers.

It carries out the reaction (2S)-2-hydroxy-3-oxobutyl phosphate + 5-amino-6-(D-ribitylamino)uracil = 6,7-dimethyl-8-(1-D-ribityl)lumazine + phosphate + 2 H2O + H(+). The protein operates within cofactor biosynthesis; riboflavin biosynthesis; riboflavin from 2-hydroxy-3-oxobutyl phosphate and 5-amino-6-(D-ribitylamino)uracil: step 1/2. In terms of biological role, catalyzes the formation of 6,7-dimethyl-8-ribityllumazine by condensation of 5-amino-6-(D-ribitylamino)uracil with 3,4-dihydroxy-2-butanone 4-phosphate. This is the penultimate step in the biosynthesis of riboflavin. The protein is 6,7-dimethyl-8-ribityllumazine synthase of Staphylococcus epidermidis (strain ATCC 35984 / DSM 28319 / BCRC 17069 / CCUG 31568 / BM 3577 / RP62A).